The primary structure comprises 1755 residues: Transposon Ty1-ML1 Gag-Pol polyprotein (1755 aa).

3 stretches are compositionally biased toward polar residues: residues 1–23 (MESQQLSNYPNISHGSACASVTS), 48–60 (TKANSQQTTTPAS), and 127–152 (QSQFPQYPSSVGTPLSTPSPESGNTF). 3 disordered regions span residues 1-88 (MESQ…YPQQ), 126-173 (PQSQ…RPPP), and 352-421 (GSRN…SKST). Residues 153–165 (TDSSSADSDMTST) are compositionally biased toward low complexity. Residues 299–401 (NNGIHINNKV…NSKSKTARAH (103 aa)) are RNA-binding. Over residues 402 to 418 (NVSTSNNSPSTDNDSIS) the composition is skewed to low complexity. Residue Asp461 is the For protease activity; shared with dimeric partner of the active site. Residues 583–640 (NVHTSESTRKYPYPFIHRMLAHANAQTIRYSLKNNTITYFNESDVDWSSAIDYQCPDC) form an integrase-type zinc finger-like region. The region spanning 660–835 (NSYEPFQYLH…AGLDISTLLP (176 aa)) is the Integrase catalytic domain. Residues Asp671 and Asp736 each contribute to the Mg(2+) site. Disordered regions lie at residues 956-1087 (SKAV…ETEK), 1092-1111 (RSPSIDASPPENNSSHNIVP), and 1130-1171 (DLPL…DSNA). Positions 960–969 (SPTDSTPPST) are enriched in low complexity. Residues 1005–1015 (STPQISNIEST) show a composition bias toward polar residues. Positions 1038–1053 (ESSHASKSKDFRHSDS) are enriched in basic and acidic residues. 2 stretches are compositionally biased toward polar residues: residues 1054 to 1082 (YSENETNHTNVPISSTGGTNNKTVPQISD) and 1101 to 1111 (PENNSSHNIVP). Positions 1178 to 1212 (KKRSLEDNETEIKVSRDTWNTKNMRSLEPPRSKKR) match the Bipartite nuclear localization signal motif. A Reverse transcriptase Ty1/copia-type domain is found at 1338–1476 (NNYYITQLDI…DILGLEIKYQ (139 aa)). The Mg(2+) site is built by Asp1346, Asp1427, Asp1428, Asp1610, Glu1652, and Asp1685. In terms of domain architecture, RNase H Ty1/copia-type spans 1610 to 1752 (DASYGNQPYY…IKTFKLLTNK (143 aa)).

In terms of assembly, the capsid protein forms a homotrimer, from which the VLPs are assembled. The protease is a homodimer, whose active site consists of two apposed aspartic acid residues. In terms of processing, initially, virus-like particles (VLPs) are composed of the structural unprocessed proteins Gag and Gag-Pol, and also contain the host initiator methionine tRNA (tRNA(i)-Met) which serves as a primer for minus-strand DNA synthesis, and a dimer of genomic Ty RNA. Processing of the polyproteins occurs within the particle and proceeds by an ordered pathway, called maturation. First, the protease (PR) is released by autocatalytic cleavage of the Gag-Pol polyprotein yielding capsid protein p45 and a Pol-p154 precursor protein. This cleavage is a prerequisite for subsequent processing of Pol-p154 at the remaining sites to release the mature structural and catalytic proteins. Maturation takes place prior to the RT reaction and is required to produce transposition-competent VLPs.

Its subcellular location is the cytoplasm. It localises to the nucleus. It carries out the reaction DNA(n) + a 2'-deoxyribonucleoside 5'-triphosphate = DNA(n+1) + diphosphate. It catalyses the reaction Endonucleolytic cleavage to 5'-phosphomonoester.. Capsid protein (CA) is the structural component of the virus-like particle (VLP), forming the shell that encapsulates the retrotransposons dimeric RNA genome. The particles are assembled from trimer-clustered units and there are holes in the capsid shells that allow for the diffusion of macromolecules. CA also has nucleocapsid-like chaperone activity, promoting primer tRNA(i)-Met annealing to the multipartite primer-binding site (PBS), dimerization of Ty1 RNA and initiation of reverse transcription. Functionally, the aspartyl protease (PR) mediates the proteolytic cleavages of the Gag and Gag-Pol polyproteins after assembly of the VLP. In terms of biological role, reverse transcriptase/ribonuclease H (RT) is a multifunctional enzyme that catalyzes the conversion of the retro-elements RNA genome into dsDNA within the VLP. The enzyme displays a DNA polymerase activity that can copy either DNA or RNA templates, and a ribonuclease H (RNase H) activity that cleaves the RNA strand of RNA-DNA heteroduplexes during plus-strand synthesis and hydrolyzes RNA primers. The conversion leads to a linear dsDNA copy of the retrotransposon that includes long terminal repeats (LTRs) at both ends. Its function is as follows. Integrase (IN) targets the VLP to the nucleus, where a subparticle preintegration complex (PIC) containing at least integrase and the newly synthesized dsDNA copy of the retrotransposon must transit the nuclear membrane. Once in the nucleus, integrase performs the integration of the dsDNA into the host genome. The sequence is that of Transposon Ty1-ML1 Gag-Pol polyprotein (TY1B-ML1) from Saccharomyces cerevisiae (strain ATCC 204508 / S288c) (Baker's yeast).